The primary structure comprises 513 residues: CUGBP Elav-like family member 1 (513 aa).

The residue at position 31 (T31) is a Phosphothreonine. RRM domains lie at 43 to 126 (IKMF…PADS) and 135 to 215 (RKLF…FADT). K136 is covalently cross-linked (Glycyl lysine isopeptide (Lys-Gly) (interchain with G-Cter in SUMO2)). Phosphoserine is present on residues S206 and S329. Residues 304–336 (TPSGTNALTTSSSPLSVLTSSGSSPSSSSSNSV) are disordered. The segment covering 311-336 (LTTSSSPLSVLTSSGSSPSSSSSNSV) has biased composition (low complexity). Positions 428 to 506 (ANLFIYHLPQ…KRLKVQLKRS (79 aa)) constitute an RRM 3 domain.

It belongs to the CELF/BRUNOL family. As to quaternary structure, associates with polysomes. Interacts with HNRNPH1; the interaction in RNA-dependent. Interacts with PARN. Component of an EIF2 complex at least composed of CELF1/CUGBP1, CALR, CALR3, EIF2S1, EIF2S2, HSP90B1 and HSPA5.

It localises to the nucleus. It is found in the cytoplasm. Functionally, RNA-binding protein implicated in the regulation of several post-transcriptional events. Involved in pre-mRNA alternative splicing, mRNA translation and stability. Mediates exon inclusion and/or exclusion in pre-mRNA that are subject to tissue-specific and developmentally regulated alternative splicing. Specifically activates exon 5 inclusion of cardiac isoforms of TNNT2 during heart remodeling at the juvenile to adult transition. Acts both as an activator and as a repressor of a pair of coregulated exons: promotes inclusion of the smooth muscle (SM) exon but exclusion of the non-muscle (NM) exon in actinin pre-mRNAs. Activates SM exon 5 inclusion by antagonizing the repressive effect of PTB. Promotes exclusion of exon 11 of the INSR pre-mRNA. Inhibits, together with HNRNPH1, insulin receptor (IR) pre-mRNA exon 11 inclusion in myoblast. Increases translation and controls the choice of translation initiation codon of CEBPB mRNA. Increases mRNA translation of CEBPB in aging liver. Increases translation of CDKN1A mRNA by antagonizing the repressive effect of CALR3. Mediates rapid cytoplasmic mRNA deadenylation. Recruits the deadenylase PARN to the poly(A) tail of EDEN-containing mRNAs to promote their deadenylation. Required for completion of spermatogenesis. Binds to (CUG)n triplet repeats in the 3'-UTR of transcripts such as DMPK and to Bruno response elements (BREs). Binds to muscle-specific splicing enhancer (MSE) intronic sites flanking the alternative exon 5 of TNNT2 pre-mRNA. Binds to AU-rich sequences (AREs or EDEN-like) localized in the 3'-UTR of JUN and FOS mRNAs. Binds to the IR RNA. Binds to the 5'-region of CDKN1A and CEBPB mRNAs. Binds with the 5'-region of CEBPB mRNA in aging liver. May be a specific regulator of miRNA biogenesis. Binds to primary microRNA pri-MIR140 and, with CELF2, negatively regulates the processing to mature miRNA. The sequence is that of CUGBP Elav-like family member 1 (CELF1) from Pongo abelii (Sumatran orangutan).